The primary structure comprises 350 residues: Biotin synthase (350 aa).

Residues 54–278 (REIQLSTLLS…TMPQSYVRLS (225 aa)) form the Radical SAM core domain. 3 residues coordinate [4Fe-4S] cluster: cysteine 69, cysteine 73, and cysteine 76. The [2Fe-2S] cluster site is built by cysteine 113, cysteine 144, cysteine 204, and arginine 276.

The protein belongs to the radical SAM superfamily. Biotin synthase family. Homodimer. [4Fe-4S] cluster serves as cofactor. Requires [2Fe-2S] cluster as cofactor.

The catalysed reaction is (4R,5S)-dethiobiotin + (sulfur carrier)-SH + 2 reduced [2Fe-2S]-[ferredoxin] + 2 S-adenosyl-L-methionine = (sulfur carrier)-H + biotin + 2 5'-deoxyadenosine + 2 L-methionine + 2 oxidized [2Fe-2S]-[ferredoxin]. Its pathway is cofactor biosynthesis; biotin biosynthesis; biotin from 7,8-diaminononanoate: step 2/2. In terms of biological role, catalyzes the conversion of dethiobiotin (DTB) to biotin by the insertion of a sulfur atom into dethiobiotin via a radical-based mechanism. In Neisseria meningitidis serogroup C (strain 053442), this protein is Biotin synthase.